The sequence spans 153 residues: 3-hydroxyacyl-[acyl-carrier-protein] dehydratase FabZ (153 aa).

His-54 is a catalytic residue.

This sequence belongs to the thioester dehydratase family. FabZ subfamily.

The protein resides in the cytoplasm. It carries out the reaction a (3R)-hydroxyacyl-[ACP] = a (2E)-enoyl-[ACP] + H2O. Involved in unsaturated fatty acids biosynthesis. Catalyzes the dehydration of short chain beta-hydroxyacyl-ACPs and long chain saturated and unsaturated beta-hydroxyacyl-ACPs. This Shewanella frigidimarina (strain NCIMB 400) protein is 3-hydroxyacyl-[acyl-carrier-protein] dehydratase FabZ.